Consider the following 136-residue polypeptide: Protein NrdI (136 aa).

This sequence belongs to the NrdI family.

Probably involved in ribonucleotide reductase function. This is Protein NrdI from Citrobacter koseri (strain ATCC BAA-895 / CDC 4225-83 / SGSC4696).